The chain runs to 125 residues: Salivary protein 15 Ipac-1 (125 aa).

The first 15 residues, 1-15 (MKVVCIILLFGIAAA), serve as a signal peptide directing secretion. Residues Asn-82 and Asn-94 are each glycosylated (N-linked (GlcNAc...) asparagine). Positions 106-125 (GPSGQTCADKSKCVGHIPGC) are CD4-binding.

The protein belongs to the salp15 family. Interacts with host CD4. Interacts with host DC-SIGN (CD209). Interacts with Borrelia outer surface protein C (OspC). Expressed in salivary glands.

It is found in the secreted. Its function is as follows. Salivary tick protein that downregulates host immune system by binding to both dendritic cells, and CD4(+) T cells. Specifically binds to the CD4 coreceptor on T cells. This interaction prevents the activation of the Src kinase, Lck, and its downstream substrate Zap-70, and results in deficient activation of PLCgamma1, the repression of calcium fluxes triggered by T-cell antigen receptor (TCR) ligation, and a subsequent reduction in interleukin-2 production. This salivary protein also binds to DC-SIGN (CD209) on dendritic cells (DC) and activates the Raf-1 kinase/MEK signaling pathway that results in down-regulating expression of pro-inflammatory cytokines. Furthermore, it inhibits T cell proliferation induced by DCs. It also inhibits in vitro keratinocyte inflammation induced by Borrelia burgdorferi or by the major outer surface protein (OspC) of Borrelia. In addition, it downregulates chemokines and monocyte chemoattractant protein 1, as well as several antimicrobial peptides such as defensins, cathelicidin, psoriasin, and RNase 7. Apart from its immunomodulatory activities, it is also associated with protection of Borrelia spirochetes from antibody-mediated killing through its binding to OspC. In vivo, tests on different immune disease animal models show promising therapeutic results, e.g., in inhibiting HIV infection, experimental autoimmune encephalomyelitis, transplantation rejection, and asthma. The polypeptide is Salivary protein 15 Ipac-1 (Ixodes pacificus (Western black-legged tick)).